Reading from the N-terminus, the 79-residue chain is MADAITVLTAIGITVLMLLMVISGTAMIVKELNPNDIFTMQSLKFNRAVTIFKYIGLFIYIPGTIILYATYIKSLLMKS.

At 1-3 (MAD) the chain is on the intravirion side. The chain crosses the membrane as a helical span at residues 4–24 (AITVLTAIGITVLMLLMVISG). At 25 to 47 (TAMIVKELNPNDIFTMQSLKFNR) the chain is on the virion surface side. The helical transmembrane segment at 48 to 68 (AVTIFKYIGLFIYIPGTIILY) threads the bilayer. Residues 69 to 79 (ATYIKSLLMKS) are Intravirion-facing.

This sequence belongs to the orthopoxvirus OPG081 family.

It localises to the virion membrane. Functionally, envelope protein. This is Protein OPG081 (OPG081) from Variola virus.